The sequence spans 295 residues: Aspartate carbamoyltransferase catalytic subunit (295 aa).

Carbamoyl phosphate contacts are provided by Arg-54 and Thr-55. Lys-82 lines the L-aspartate pocket. Positions 104, 132, and 135 each coordinate carbamoyl phosphate. Residues Arg-165 and Arg-218 each coordinate L-aspartate. Gly-257 and Pro-258 together coordinate carbamoyl phosphate.

This sequence belongs to the aspartate/ornithine carbamoyltransferase superfamily. ATCase family. Heterododecamer (2C3:3R2) of six catalytic PyrB chains organized as two trimers (C3), and six regulatory PyrI chains organized as three dimers (R2).

The enzyme catalyses carbamoyl phosphate + L-aspartate = N-carbamoyl-L-aspartate + phosphate + H(+). It participates in pyrimidine metabolism; UMP biosynthesis via de novo pathway; (S)-dihydroorotate from bicarbonate: step 2/3. Catalyzes the condensation of carbamoyl phosphate and aspartate to form carbamoyl aspartate and inorganic phosphate, the committed step in the de novo pyrimidine nucleotide biosynthesis pathway. This chain is Aspartate carbamoyltransferase catalytic subunit, found in Wolbachia pipientis subsp. Culex pipiens (strain wPip).